A 266-amino-acid polypeptide reads, in one-letter code: MKEELFKEKSRYITGVVLIVVAGLILYADNLLLFWAVLGGIYAVGFFEALRLFQVKASFSLYLILVLSWVAAYFNGHPVECALISAMVMASVIAYQKAHHSEAILPFLYPGVGFFALFGVYKDFGAVAIIWLLVVVVASDVGAFFGGKLLGKTPFTATSPNKTLEGALIGVVLASVLGSFVGMGKLSGGFLMALLFSFLIALMAVFGDLYESYLKRKVGVKDSGKILPGHGGVLDRLDSMLFGALSLHVLLYFLEIWKETAVFLGD.

8 consecutive transmembrane segments (helical) span residues 16–36 (VVLIVVAGLILYADNLLLFWA), 52–72 (LFQVKASFSLYLILVLSWVAA), 78–98 (PVECALISAMVMASVIAYQKA), 101–121 (SEAILPFLYPGVGFFALFGVY), 125–145 (GAVAIIWLLVVVVASDVGAFF), 164–184 (LEGALIGVVLASVLGSFVGMG), 186–206 (LSGGFLMALLFSFLIALMAVF), and 237–257 (LDSMLFGALSLHVLLYFLEIW).

This sequence belongs to the CDS family.

It localises to the cell inner membrane. The enzyme catalyses a 1,2-diacyl-sn-glycero-3-phosphate + CTP + H(+) = a CDP-1,2-diacyl-sn-glycerol + diphosphate. It participates in phospholipid metabolism; CDP-diacylglycerol biosynthesis; CDP-diacylglycerol from sn-glycerol 3-phosphate: step 3/3. The chain is Phosphatidate cytidylyltransferase (cdsA) from Helicobacter pylori (strain J99 / ATCC 700824) (Campylobacter pylori J99).